We begin with the raw amino-acid sequence, 105 residues long: Large ribosomal subunit protein uL24 (105 aa).

The protein belongs to the universal ribosomal protein uL24 family. In terms of assembly, part of the 50S ribosomal subunit.

Functionally, one of two assembly initiator proteins, it binds directly to the 5'-end of the 23S rRNA, where it nucleates assembly of the 50S subunit. Its function is as follows. One of the proteins that surrounds the polypeptide exit tunnel on the outside of the subunit. The chain is Large ribosomal subunit protein uL24 from Tolumonas auensis (strain DSM 9187 / NBRC 110442 / TA 4).